Consider the following 331-residue polypeptide: Ferrochelatase (331 aa).

Residues His187 and Glu286 each coordinate Fe cation.

Belongs to the ferrochelatase family.

The protein resides in the cytoplasm. It catalyses the reaction heme b + 2 H(+) = protoporphyrin IX + Fe(2+). Its pathway is porphyrin-containing compound metabolism; protoheme biosynthesis; protoheme from protoporphyrin-IX: step 1/1. In terms of biological role, catalyzes the ferrous insertion into protoporphyrin IX. In Legionella pneumophila (strain Paris), this protein is Ferrochelatase.